Reading from the N-terminus, the 339-residue chain is Olfactory receptor 7E24 (339 aa).

Over 1–43 (MSYFPILFFFFLKRCPSYTEPQNLTGVSEFLLLGLSEDPELQP) the chain is Extracellular. Asparagine 23 carries an N-linked (GlcNAc...) asparagine glycan. The chain crosses the membrane as a helical span at residues 44–64 (VLAGLFLSMYLVTVLGNLLII). The Cytoplasmic segment spans residues 65–72 (LAVSSDSH). A helical membrane pass occupies residues 73 to 93 (LHTPMYFFLSNLSLADIGFTS). Residues 94 to 117 (TTVPKMIVDMQTHSRVISYEGCLT) are Extracellular-facing. Residues cysteine 115 and cysteine 207 are joined by a disulfide bond. A helical membrane pass occupies residues 118–138 (QMSFFVLFACMDDMLLSVMAY). Residues 139–157 (DRFVAICHPLHYRIIMNPR) lie on the Cytoplasmic side of the membrane. Residues 158–178 (LCGFLILLSFFISLLDSQLHN) form a helical membrane-spanning segment. Over 179–215 (LIMLQLTCFKDVDISNFFCDPSQLLHLRCSDTFINEM) the chain is Extracellular. A helical membrane pass occupies residues 216–235 (VIYFMGAIFGCLPISGILFS). Residues 236 to 255 (YYKIVSPILRVPTSDGKYKA) lie on the Cytoplasmic side of the membrane. Residues 256-276 (FSTCGSHLAVVCLFYGTGLVG) traverse the membrane as a helical segment. The Extracellular segment spans residues 277–289 (YLSSAVLPSPRKS). A helical membrane pass occupies residues 290–310 (MVASVMYTVVTPMLNPFIYSL). Topologically, residues 311–339 (RNKDIQSALCRLHGRIIKSHHLHPFCYMG) are cytoplasmic.

Belongs to the G-protein coupled receptor 1 family.

Its subcellular location is the cell membrane. Functionally, odorant receptor. The chain is Olfactory receptor 7E24 (OR7E24) from Homo sapiens (Human).